A 216-amino-acid polypeptide reads, in one-letter code: Glutathione S-transferase D5 (216 aa).

The GST N-terminal domain occupies 1–80 (MDFYYSPRGS…YLVEKYGKDD (80 aa)). Glutathione-binding positions include 50-52 (HTI) and 64-66 (ESR). A GST C-terminal domain is found at 86–207 (DPKKQALVNQ…KGAVELKGVF (122 aa)).

The protein belongs to the GST superfamily. Delta family. As to quaternary structure, homodimer.

It carries out the reaction RX + glutathione = an S-substituted glutathione + a halide anion + H(+). Functionally, conjugation of reduced glutathione to a wide number of exogenous and endogenous hydrophobic electrophiles. May be involved in detoxification. The polypeptide is Glutathione S-transferase D5 (Drosophila melanogaster (Fruit fly)).